The chain runs to 339 residues: Glycerol-3-phosphate dehydrogenase [NAD(P)+] (339 aa).

Residues S15, Y16, H36, and K110 each coordinate NADPH. K110, G139, and T141 together coordinate sn-glycerol 3-phosphate. Position 143 (A143) interacts with NADPH. K195, D248, S258, R259, and N260 together coordinate sn-glycerol 3-phosphate. K195 serves as the catalytic Proton acceptor. An NADPH-binding site is contributed by R259. Residues V283 and E285 each coordinate NADPH.

The protein belongs to the NAD-dependent glycerol-3-phosphate dehydrogenase family.

Its subcellular location is the cytoplasm. It catalyses the reaction sn-glycerol 3-phosphate + NAD(+) = dihydroxyacetone phosphate + NADH + H(+). The enzyme catalyses sn-glycerol 3-phosphate + NADP(+) = dihydroxyacetone phosphate + NADPH + H(+). The protein operates within membrane lipid metabolism; glycerophospholipid metabolism. Catalyzes the reduction of the glycolytic intermediate dihydroxyacetone phosphate (DHAP) to sn-glycerol 3-phosphate (G3P), the key precursor for phospholipid synthesis. The polypeptide is Glycerol-3-phosphate dehydrogenase [NAD(P)+] (Pectobacterium atrosepticum (strain SCRI 1043 / ATCC BAA-672) (Erwinia carotovora subsp. atroseptica)).